Consider the following 1149-residue polypeptide: Polyprotein nsP1234 (1149 aa).

The region spanning 1–160 (APSYRVRRTD…KIQEAIDRRT (160 aa)) is the Macro domain. Positions 10, 24, 32, 112, 113, and 114 each coordinate ADP-D-ribose. Residues Cys-262, Cys-264, Cys-287, and Cys-305 each contribute to the Zn(2+) site. The residue at position 344 (Thr-344) is a Phosphothreonine; by host. 2 consecutive short sequence motifs (FGDF; binding to host G3BP1) follow at residues 512 to 515 (FGDF) and 523 to 526 (FGDI). The 116-residue stretch at 903–1018 (DAVLETDIAS…HGVRSDPLMA (116 aa)) folds into the RdRp catalytic domain.

As to quaternary structure, interacts with mRNA-capping enzyme nsP1. Interacts with host DDX1. RNA-directed Interacts with host DDX3. Interacts (via C-terminus) with host G3BP1; this interaction inhibits the formation of host stress granules on viral mRNAs and the nsp3-G3BP1 complexes bind viral RNAs and probably orchestrate the assembly of viral replication complexes. Interacts (via C-terminus) with host G3BP2; this interaction inhibits the formation of host stress granules on viral mRNAs and the nsp3-G3BP2 complexes bind viral RNAs and probably orchestrate the assembly of viral replication complexes. In terms of assembly, interacts with itself. Interacts with mRNA-capping enzyme nsP1. Interacts with protease nsP2. Interacts with itself. Mg(2+) is required as a cofactor. It depends on Mn(2+) as a cofactor. Post-translationally, polyprotein P1234: Specific enzymatic cleavages in vivo yield mature proteins. The processing of the polyprotein is temporally regulated. In early stages (1.7 hpi), P1234 is first cleaved in trans through its nsP2 protease activity, releasing P123' and nsP4, which associate to form the early replication complex. At the same time, P1234 is also cut at the nsP1/nsP2 site early in infection but with lower efficiency. After replication of the viral minus-strand RNAs (4 hpi), the polyproteins are cut at the nsP1/nsP2 and nsP2/nsP3 sites very efficiently, preventing accumulation of P123' and P1234 and allowing the formation of the late replication complex. NsP3'/nsP4 site is not cleaved anymore and P34 is produced rather than nsP4. In terms of processing, specific enzymatic cleavages in vivo yield mature proteins. The processing of the polyprotein is temporally regulated. In early stages (1.7 hpi), P123 is cleaved at the nsP1/nsP2 site with low efficiency. After replication of the viral minus-strand RNAs (4 hpi), the polyproteins are cut at the nsP1/nsP2 and nsP2/nsP3 sites very efficiently, preventing accumulation of P123 and allowing the formation of the late replication complex. Phosphorylated by host on serines and threonines. Post-translationally, ubiquitinated; targets the protein for rapid degradation via the ubiquitin system. Nsp4 is present in extremely low quantities due to low frequency of translation through the amber stop-codon and the degradation by the ubiquitin pathway.

It localises to the host cytoplasmic vesicle membrane. The enzyme catalyses RNA(n) + a ribonucleoside 5'-triphosphate = RNA(n+1) + diphosphate. The catalysed reaction is 4-O-(ADP-D-ribosyl)-L-aspartyl-[protein] + H2O = L-aspartyl-[protein] + ADP-D-ribose + H(+). It carries out the reaction 5-O-(ADP-D-ribosyl)-L-glutamyl-[protein] + H2O = L-glutamyl-[protein] + ADP-D-ribose + H(+). It catalyses the reaction RNA(n) + ATP = RNA(n)-3'-adenine ribonucleotide + diphosphate. The enzyme catalyses ADP-alpha-D-ribose 1''-phosphate + H2O = ADP-D-ribose + phosphate. In terms of biological role, polyprotein P1234: Inactive precursor of the viral replicase, which is activated by cleavages carried out by the viral protease nsP2. Its function is as follows. The early replication complex formed by the polyprotein P123 and nsP4 synthesizes minus-strand RNAs. As soon P123 is cleaved into mature proteins, the plus-strand RNAs synthesis begins. Functionally, the early replication complex formed by the polyprotein P123' and nsP4 synthesizes minus-strand RNAs. Polyprotein P123' is a short-lived polyprotein that accumulates during early stage of infection. As soon P123' is cleaved into mature proteins, the plus-strand RNAs synthesis begins. Seems to be essential for minus-strand RNAs and subgenomic 26S mRNAs synthesis. Displays mono-ADP-ribosylhydrolase activity. ADP-ribosylation is a post-translational modification that controls various processes of the host cell and the virus probably needs to revert it for optimal viral replication. Binds proteins of FXR family and sequesters them into the viral RNA replication complexes thereby inhibiting the formation of host stress granules on viral mRNAs. The nsp3'-FXR complexes bind viral RNAs and probably orchestrate the assembly of viral replication complexes, thanks to the ability of FXR family members to self-assemble and bind DNA. In terms of biological role, seems to be essential for minus-strand RNAs and subgenomic 26S mRNAs synthesis. Displays mono-ADP-ribosylhydrolase activity. ADP-ribosylation is a post-translational modification that controls various processes of the host cell and the virus probably needs to revert it for optimal viral replication. Binds proteins of G3BP family and sequesters them into the viral RNA replication complexes thereby inhibiting the formation of host stress granules on viral mRNAs. The nsp3-G3BP complexes bind viral RNAs and probably orchestrate the assembly of viral replication complexes, thanks to the ability of G3BP family members to self-assemble and bind DNA. Its function is as follows. RNA dependent RNA polymerase. Replicates genomic and antigenomic RNA by recognizing replications specific signals. The early replication complex formed by the polyprotein P123 and nsP4 synthesizes minus-strand RNAs. The late replication complex composed of fully processed nsP1-nsP4 is responsible for the production of genomic and subgenomic plus-strand RNAs. The protein is Polyprotein nsP1234 of Ross river virus (strain T48) (RRV).